A 218-amino-acid polypeptide reads, in one-letter code: Oxidative stress regulator AosR (218 aa).

The short motif at 5 to 9 (CGRRC) is the CXXXC element. A disulfide bond links C5 and C9.

This sequence belongs to the AosR family. Homodimer. Under oxidative stress, interacts with the extracytoplasmic-function (ECF) RNA polymerase sigma factor SigH.

Activity is modulated by the formation of a disulfide bound within the N-terminal Cys-X-X-X-Cys (CXXXC) motif. This intramolecular disulfide bond is formed in response to oxidative stress, and results in oxidative stress-dependent interaction with the sigma factor SigH. Functionally, transcription factor crucial for intra-mycobacterial redox homeostasis and protection against host-derived oxidative and nitrosative radicals. In response to oxidative stress, interacts with the ECF sigma factor SigH and, in conjunction with SigH, binds to an auxiliary promoter upstream of mec-cysO-cysM, leading to the transcriptional activation of these genes encoding a non-canonical actinomycete-specific cysteine biosynthesis pathway. Increased transcription of mec-cysO-cysM results in enhanced production of L-cysteine and cysteine-derived antioxidant molecules. Increased production of cysteine protects mycobacteria cells from host phagocyte-derived oxidative and nitrosative stress, thus facilitating the mycobacterial growth in the host. This is Oxidative stress regulator AosR from Mycobacterium bovis (strain ATCC BAA-935 / AF2122/97).